Consider the following 319-residue polypeptide: ATP-dependent 6-phosphofructokinase (319 aa).

Gly-11 provides a ligand contact to ATP. Residues 21–25 (RSVVR) and Asp-59 contribute to the ADP site. Residues 72 to 73 (RC) and 102 to 105 (GDGS) each bind ATP. Asp-103 lines the Mg(2+) pocket. A substrate-binding site is contributed by 125-127 (TID). Asp-127 acts as the Proton acceptor in catalysis. An ADP-binding site is contributed by Arg-154. Residues Arg-162 and 169–171 (MGR) each bind substrate. ADP-binding positions include 185–187 (GAE), Arg-211, and 213–215 (KKH). Substrate-binding positions include Glu-222, Arg-243, and 249 to 252 (HVQR).

The protein belongs to the phosphofructokinase type A (PFKA) family. ATP-dependent PFK group I subfamily. Prokaryotic clade 'B1' sub-subfamily. As to quaternary structure, homotetramer. Requires Mg(2+) as cofactor.

Its subcellular location is the cytoplasm. The catalysed reaction is beta-D-fructose 6-phosphate + ATP = beta-D-fructose 1,6-bisphosphate + ADP + H(+). The protein operates within carbohydrate degradation; glycolysis; D-glyceraldehyde 3-phosphate and glycerone phosphate from D-glucose: step 3/4. Its activity is regulated as follows. Allosterically activated by ADP and other diphosphonucleosides, and allosterically inhibited by phosphoenolpyruvate. Functionally, catalyzes the phosphorylation of D-fructose 6-phosphate to fructose 1,6-bisphosphate by ATP, the first committing step of glycolysis. The polypeptide is ATP-dependent 6-phosphofructokinase (Geobacillus stearothermophilus (Bacillus stearothermophilus)).